The chain runs to 913 residues: Protein translocase subunit SecA (913 aa).

ATP contacts are provided by residues glutamine 87, 105–109, and aspartate 512; that span reads GEGKT. The disordered stretch occupies residues 864–913; sequence LDQPEEEPAEVEGQPDVAVASVRTEPKIGRNEPCPCGSGKKYKHCHGQVQ. Zn(2+) is bound by residues cysteine 897, cysteine 899, cysteine 908, and histidine 909. A compositionally biased stretch (basic residues) spans 903–913; sequence KKYKHCHGQVQ.

The protein belongs to the SecA family. Monomer and homodimer. Part of the essential Sec protein translocation apparatus which comprises SecA, SecYEG and auxiliary proteins SecDF-YajC and YidC. Zn(2+) is required as a cofactor.

It is found in the cell inner membrane. The protein resides in the cytoplasm. The enzyme catalyses ATP + H2O + cellular proteinSide 1 = ADP + phosphate + cellular proteinSide 2.. Its function is as follows. Part of the Sec protein translocase complex. Interacts with the SecYEG preprotein conducting channel. Has a central role in coupling the hydrolysis of ATP to the transfer of proteins into and across the cell membrane, serving both as a receptor for the preprotein-SecB complex and as an ATP-driven molecular motor driving the stepwise translocation of polypeptide chains across the membrane. This Stutzerimonas stutzeri (strain A1501) (Pseudomonas stutzeri) protein is Protein translocase subunit SecA.